The sequence spans 217 residues: Small ribosomal subunit protein uS3 (217 aa).

Residues 29–97 (ADYLHEDLAI…AQLNKLTGKQ (69 aa)) form the KH type-2 domain.

Belongs to the universal ribosomal protein uS3 family. Part of the 30S ribosomal subunit. Forms a tight complex with proteins S10 and S14.

In terms of biological role, binds the lower part of the 30S subunit head. Binds mRNA in the 70S ribosome, positioning it for translation. This chain is Small ribosomal subunit protein uS3, found in Streptococcus mutans serotype c (strain ATCC 700610 / UA159).